Here is a 282-residue protein sequence, read N- to C-terminus: Putative 4-diphosphocytidyl-2-C-methyl-D-erythritol kinase (282 aa).

Residue K9 is part of the active site. 93–103 (PVSAGLAGGSA) contacts ATP. D135 is an active-site residue.

Belongs to the GHMP kinase family. IspE subfamily.

The enzyme catalyses 4-CDP-2-C-methyl-D-erythritol + ATP = 4-CDP-2-C-methyl-D-erythritol 2-phosphate + ADP + H(+). Catalyzes the phosphorylation of the position 2 hydroxy group of 4-diphosphocytidyl-2C-methyl-D-erythritol. The chain is Putative 4-diphosphocytidyl-2-C-methyl-D-erythritol kinase from Staphylococcus aureus (strain MSSA476).